Consider the following 209-residue polypeptide: Small ribosomal subunit protein uS5 (209 aa).

The 64-residue stretch at 48-111 (LEDEVLDINM…DAAKLNITYI (64 aa)) folds into the S5 DRBM domain.

It belongs to the universal ribosomal protein uS5 family. Part of the 30S ribosomal subunit. Contacts protein S4.

Its function is as follows. With S4 and S12 plays an important role in translational accuracy. This chain is Small ribosomal subunit protein uS5, found in Methanosarcina mazei (strain ATCC BAA-159 / DSM 3647 / Goe1 / Go1 / JCM 11833 / OCM 88) (Methanosarcina frisia).